A 235-amino-acid polypeptide reads, in one-letter code: MAPIPQNSSTEVSLLHPKVLLLSAGITTTAFLSYKFHQRYVTRLRTYLDITPKILDNQQKLYGYVTRVGDGDNFRFFHTPGGVFMGWGWLRKIPTNRNQLKDETLMIRLCGVDAPERSHWGKPAQPFSEEALIWLSSYVGKRYVTVTPFSIDQYKRLVARAQVWKWTGKKDVSAEMIRQGLGIVYEGKSGAEFGDNEALYRNLEAKAKRQKKGVWSLGKKMTTPGEFKREHYRGD.

A helical membrane pass occupies residues 20–37 (LLLSAGITTTAFLSYKFH). One can recognise a TNase-like domain in the interval 59–217 (QKLYGYVTRV…KRQKKGVWSL (159 aa)). The active site involves Arg108. Ca(2+) is bound at residue Asp113. Active-site residues include Glu116 and Arg156.

It belongs to the LCL3 family.

Its subcellular location is the mitochondrion. It is found in the membrane. In Scheffersomyces stipitis (strain ATCC 58785 / CBS 6054 / NBRC 10063 / NRRL Y-11545) (Yeast), this protein is Probable endonuclease LCL3 (LCL3).